The chain runs to 125 residues: Small ribosomal subunit protein uS12 (125 aa).

Residue aspartate 89 is modified to 3-methylthioaspartic acid.

It belongs to the universal ribosomal protein uS12 family. As to quaternary structure, part of the 30S ribosomal subunit. Contacts proteins S8 and S17. May interact with IF1 in the 30S initiation complex.

In terms of biological role, with S4 and S5 plays an important role in translational accuracy. Its function is as follows. Interacts with and stabilizes bases of the 16S rRNA that are involved in tRNA selection in the A site and with the mRNA backbone. Located at the interface of the 30S and 50S subunits, it traverses the body of the 30S subunit contacting proteins on the other side and probably holding the rRNA structure together. The combined cluster of proteins S8, S12 and S17 appears to hold together the shoulder and platform of the 30S subunit. The sequence is that of Small ribosomal subunit protein uS12 from Cupriavidus necator (strain ATCC 17699 / DSM 428 / KCTC 22496 / NCIMB 10442 / H16 / Stanier 337) (Ralstonia eutropha).